The primary structure comprises 569 residues: Potassium-transporting ATPase potassium-binding subunit (569 aa).

10 helical membrane passes run 11–31 (LLLALVFLTIKPLGLYIACVF), 64–84 (LAYTLAMLAFNAAGFLALYGI), 135–155 (AGLAVQNFLSAATGIAIALAV), 179–199 (LYLLLPMSIVLALVFVWMGIP), 258–278 (FNILAMMSITMALIYAFGKMV), 285–305 (WALIASVAVLLIAGIAAVYIA), 384–404 (GLYGLIVFCVLTVFVAGLMVG), 423–443 (MLAVLVLPFAILGFSAIAAVL), 490–510 (LGISMALGRFAYAVPVLAIAG), and 531–551 (LFVGLLVAIIIILGGLQYFPA).

The protein belongs to the KdpA family. As to quaternary structure, the system is composed of three essential subunits: KdpA, KdpB and KdpC.

It is found in the cell inner membrane. Functionally, part of the high-affinity ATP-driven potassium transport (or Kdp) system, which catalyzes the hydrolysis of ATP coupled with the electrogenic transport of potassium into the cytoplasm. This subunit binds the periplasmic potassium ions and delivers the ions to the membrane domain of KdpB through an intramembrane tunnel. The polypeptide is Potassium-transporting ATPase potassium-binding subunit (Allorhizobium ampelinum (strain ATCC BAA-846 / DSM 112012 / S4) (Agrobacterium vitis (strain S4))).